Consider the following 218-residue polypeptide: Protease PrsW (218 aa).

A helical transmembrane segment spans residues 1–23 (MFAIISAGIAPGIALLSYFYLKD). At 24–30 (QYDNEPV) the chain is on the cytoplasmic side. Residues 31-53 (HMVLRSFFLGVVLVFPIMFIQYV) traverse the membrane as a helical segment. Residues 54-98 (LEKENVGGGSFFVSFLSSGFLEESLKWFILMISVYPHAHFDEHYD) are Extracellular-facing. The helical transmembrane segment at 99–121 (GIVYGASVSLGFATLENILYLIG) threads the bilayer. Residues 122 to 129 (HGVEHAFV) lie on the Cytoplasmic side of the membrane. Residues 130 to 151 (RALLPVSCHALIGVIMGFYLGK) traverse the membrane as a helical segment. Topologically, residues 152–180 (ARFSADKARVKWLTLSLVVPSLLHGSYDF) are extracellular. A helical transmembrane segment spans residues 181–203 (ILTALSNWIYYMLPFMVFLWWFG). At 204-218 (LRKAKKARSVNMMQV) the chain is on the cytoplasmic side.

This sequence belongs to the protease PrsW family.

The protein resides in the cell membrane. Involved in the degradation of anti-sigma-W factor RsiW. Responsible for Site-1 cleavage of the RsiW anti-sigma factor. This results, after two other proteolytic steps catalyzed by the RasP and ClpXP proteases, in the release of SigW and the transcription activation of the genes under the control of the sigma-W factor. Seems to be responsible for sensing antimicrobial peptides that damage the cell membrane and other agents that cause cell envelope stress. Therefore it is a protease governing regulated intramembrane proteolysis and resistance to antimicrobial peptides in B.subtilis. This chain is Protease PrsW, found in Bacillus subtilis (strain 168).